We begin with the raw amino-acid sequence, 188 residues long: Elongation factor P (188 aa).

This sequence belongs to the elongation factor P family.

The protein localises to the cytoplasm. It functions in the pathway protein biosynthesis; polypeptide chain elongation. Its function is as follows. Involved in peptide bond synthesis. Stimulates efficient translation and peptide-bond synthesis on native or reconstituted 70S ribosomes in vitro. Probably functions indirectly by altering the affinity of the ribosome for aminoacyl-tRNA, thus increasing their reactivity as acceptors for peptidyl transferase. The protein is Elongation factor P of Wolbachia sp. subsp. Brugia malayi (strain TRS).